The chain runs to 95 residues: Signal recognition particle 19 kDa protein (95 aa).

The protein belongs to the SRP19 family. As to quaternary structure, part of the signal recognition particle protein translocation system, which is composed of SRP and FtsY. Archaeal SRP consists of a 7S RNA molecule of 300 nucleotides and two protein subunits: SRP54 and SRP19.

It localises to the cytoplasm. Functionally, involved in targeting and insertion of nascent membrane proteins into the cytoplasmic membrane. Binds directly to 7S RNA and mediates binding of the 54 kDa subunit of the SRP. The protein is Signal recognition particle 19 kDa protein of Methanococcoides burtonii (strain DSM 6242 / NBRC 107633 / OCM 468 / ACE-M).